The primary structure comprises 520 residues: Rho GTPase-activating protein gacV (520 aa).

The chain crosses the membrane as a helical span at residues 8-28 (NIKTYYIIGIITLIFIVSAVI). Positions 28–192 (IKNQLSSSNQ…EEQEEEQFSM (165 aa)) form a coiled coil. 4 disordered regions span residues 33-73 (SSSN…KLDN), 121-189 (EEKQ…EEEQ), 348-373 (NNNN…NNNE), and 489-520 (LQEQ…DQEE). Basic residues predominate over residues 52-62 (SKGRGNKKGKK). Over residues 63–73 (PEKIQEKKLDN) the composition is skewed to basic and acidic residues. The segment covering 140 to 189 (QEEEEEEEEQQEIEEDEEEEEGQEQEEEEEQQEIEEGEEEQQEEEQEEEQ) has biased composition (acidic residues). In terms of domain architecture, Rho-GAP spans 195-472 (VSIERLMDFQ…ILLKQKKEIA (278 aa)). A compositionally biased stretch (low complexity) spans 348 to 372 (NNNNNNNNNNNNNNNNNNDNNNNNN). Residues 480 to 520 (YFKDEYSKKLQEQNDQEEDNQEEEKDNQEEDEDEEDKDQEE) adopt a coiled-coil conformation. A compositionally biased stretch (acidic residues) spans 493–520 (NDQEEDNQEEEKDNQEEDEDEEDKDQEE).

The protein resides in the membrane. Functionally, rho GTPase-activating protein involved in the signal transduction pathway. The sequence is that of Rho GTPase-activating protein gacV (gacV) from Dictyostelium discoideum (Social amoeba).